The primary structure comprises 583 residues: Undecaprenyl phosphate-alpha-4-amino-4-deoxy-L-arabinose arabinosyl transferase 2 (583 aa).

The interval 1-20 is disordered; the sequence is MTSRIQMHRTSPPPAYGTSA. 12 helical membrane passes run 42-62, 113-135, 145-165, 166-186, 209-229, 241-261, 290-310, 321-341, 345-365, 380-400, 409-429, and 440-460; these read LLLV…GLWI, LFGV…YLIT, SFAA…AGYS, NLDP…WFAL, FMTK…PYMI, GLVA…SIHA, WWFY…LLPG, QAPT…FSLS, LPTY…SALI, SLLN…IQLT, MLGL…NLLP, and PALG…GFIV.

This sequence belongs to the glycosyltransferase 83 family.

It localises to the cell inner membrane. The enzyme catalyses 4-amino-4-deoxy-alpha-L-arabinopyranosyl di-trans,octa-cis-undecaprenyl phosphate + lipid IVA = lipid IIA + di-trans,octa-cis-undecaprenyl phosphate.. Its pathway is lipopolysaccharide metabolism; 4-amino-4-deoxy-beta-L-arabinose-lipid A biosynthesis. Functionally, catalyzes the transfer of the L-Ara4N moiety of the glycolipid undecaprenyl phosphate-alpha-L-Ara4N to lipid A. The modified arabinose is attached to lipid A and is required for resistance to polymyxin and cationic antimicrobial peptides. The chain is Undecaprenyl phosphate-alpha-4-amino-4-deoxy-L-arabinose arabinosyl transferase 2 from Pseudomonas fluorescens (strain ATCC BAA-477 / NRRL B-23932 / Pf-5).